Here is an 81-residue protein sequence, read N- to C-terminus: Photosystem I iron-sulfur center (81 aa).

4Fe-4S ferredoxin-type domains are found at residues 2–31 (SHSVKIYDTCIGCTQCVRACPTDVLEMIPW) and 39–68 (IASAPRTEDCVGCKRCESACPTDFLSVRVY). [4Fe-4S] cluster-binding residues include Cys-11, Cys-14, Cys-17, Cys-21, Cys-48, Cys-51, Cys-54, and Cys-58.

In terms of assembly, the eukaryotic PSI reaction center is composed of at least 11 subunits. [4Fe-4S] cluster is required as a cofactor.

The protein localises to the plastid. It is found in the chloroplast thylakoid membrane. It catalyses the reaction reduced [plastocyanin] + hnu + oxidized [2Fe-2S]-[ferredoxin] = oxidized [plastocyanin] + reduced [2Fe-2S]-[ferredoxin]. In terms of biological role, apoprotein for the two 4Fe-4S centers FA and FB of photosystem I (PSI); essential for photochemical activity. FB is the terminal electron acceptor of PSI, donating electrons to ferredoxin. The C-terminus interacts with PsaA/B/D and helps assemble the protein into the PSI complex. Required for binding of PsaD and PsaE to PSI. PSI is a plastocyanin-ferredoxin oxidoreductase, converting photonic excitation into a charge separation, which transfers an electron from the donor P700 chlorophyll pair to the spectroscopically characterized acceptors A0, A1, FX, FA and FB in turn. This chain is Photosystem I iron-sulfur center, found in Phaseolus vulgaris (Kidney bean).